Here is a 210-residue protein sequence, read N- to C-terminus: Na(+)-translocating NADH-quinone reductase subunit D (210 aa).

The next 6 helical transmembrane spans lie at 9–29 (AVLFGPVLANNPIALQVLGIC), 42–62 (LIMSIALTLVTAFSSFFISTI), 72–92 (IIVQMTIIASLVIVVDQVLQA), 96–116 (ATAKELSVFIGLIITNCIVMG), 131–151 (FLDGIGNGLGYSVVLLTVGFI), and 178–198 (MGLLILPPSAFFIIGLFIWVL).

The protein belongs to the NqrDE/RnfAE family. As to quaternary structure, composed of six subunits; NqrA, NqrB, NqrC, NqrD, NqrE and NqrF.

It localises to the cell inner membrane. It carries out the reaction a ubiquinone + n Na(+)(in) + NADH + H(+) = a ubiquinol + n Na(+)(out) + NAD(+). In terms of biological role, NQR complex catalyzes the reduction of ubiquinone-1 to ubiquinol by two successive reactions, coupled with the transport of Na(+) ions from the cytoplasm to the periplasm. NqrA to NqrE are probably involved in the second step, the conversion of ubisemiquinone to ubiquinol. This chain is Na(+)-translocating NADH-quinone reductase subunit D, found in Pseudoalteromonas translucida (strain TAC 125).